Here is a 122-residue protein sequence, read N- to C-terminus: Large ribosomal subunit protein uL14 (122 aa).

The protein belongs to the universal ribosomal protein uL14 family. In terms of assembly, part of the 50S ribosomal subunit. Forms a cluster with proteins L3 and L19. In the 70S ribosome, L14 and L19 interact and together make contacts with the 16S rRNA in bridges B5 and B8.

Its function is as follows. Binds to 23S rRNA. Forms part of two intersubunit bridges in the 70S ribosome. The sequence is that of Large ribosomal subunit protein uL14 from Mesorhizobium japonicum (strain LMG 29417 / CECT 9101 / MAFF 303099) (Mesorhizobium loti (strain MAFF 303099)).